A 261-amino-acid chain; its full sequence is Cytochrome c oxidase subunit 3 (261 aa).

Topologically, residues 1–15 (MTHQTHAYHMVNPSP) are mitochondrial matrix. Residues 16–34 (WPLTGALSALLMTSGLTMW) form a helical membrane-spanning segment. At 35–40 (FHFNSM) the chain is on the mitochondrial intermembrane side. A helical transmembrane segment spans residues 41-66 (TLLMIGLTTNMLTMYQWWRDVIREST). Residues 67-72 (FQGHHT) are Mitochondrial matrix-facing. A helical membrane pass occupies residues 73-105 (PAVQKGLRYGMILFIISEVLFFTGFFWAFYHSS). Topologically, residues 106 to 128 (LAPTPELGGCWPPTGIHPLNPLE) are mitochondrial intermembrane. The chain crosses the membrane as a helical span at residues 129-152 (VPLLNTSVLLASGVSITWAHHSLM). Over 153-155 (EGD) the chain is Mitochondrial matrix. A helical membrane pass occupies residues 156–183 (RKHMLQALFITITLGVYFTLLQASEYYE). Residues 184–190 (APFTISD) lie on the Mitochondrial intermembrane side of the membrane. The chain crosses the membrane as a helical span at residues 191–223 (GVYGSTFFVATGFHGLHVIIGSTFLIVCFFRQL). The Mitochondrial matrix segment spans residues 224-232 (KFHFTSNHH). A helical membrane pass occupies residues 233–256 (FGFEAAAWYWHFVDVVWLFLYVSI). Topologically, residues 257–261 (YWWGS) are mitochondrial intermembrane.

It belongs to the cytochrome c oxidase subunit 3 family. As to quaternary structure, component of the cytochrome c oxidase (complex IV, CIV), a multisubunit enzyme composed of 14 subunits. The complex is composed of a catalytic core of 3 subunits MT-CO1, MT-CO2 and MT-CO3, encoded in the mitochondrial DNA, and 11 supernumerary subunits COX4I1 (or COX4I2), COX5A, COX5B, COX6A2 (or COX6A1), COX6B1 (or COX6B2), COX6C, COX7A1 (or COX7A2), COX7B, COX7C, COX8B and NDUFA4, which are encoded in the nuclear genome. The complex exists as a monomer or a dimer and forms supercomplexes (SCs) in the inner mitochondrial membrane with NADH-ubiquinone oxidoreductase (complex I, CI) and ubiquinol-cytochrome c oxidoreductase (cytochrome b-c1 complex, complex III, CIII), resulting in different assemblies (supercomplex SCI(1)III(2)IV(1) and megacomplex MCI(2)III(2)IV(2)).

The protein localises to the mitochondrion inner membrane. It carries out the reaction 4 Fe(II)-[cytochrome c] + O2 + 8 H(+)(in) = 4 Fe(III)-[cytochrome c] + 2 H2O + 4 H(+)(out). Its function is as follows. Component of the cytochrome c oxidase, the last enzyme in the mitochondrial electron transport chain which drives oxidative phosphorylation. The respiratory chain contains 3 multisubunit complexes succinate dehydrogenase (complex II, CII), ubiquinol-cytochrome c oxidoreductase (cytochrome b-c1 complex, complex III, CIII) and cytochrome c oxidase (complex IV, CIV), that cooperate to transfer electrons derived from NADH and succinate to molecular oxygen, creating an electrochemical gradient over the inner membrane that drives transmembrane transport and the ATP synthase. Cytochrome c oxidase is the component of the respiratory chain that catalyzes the reduction of oxygen to water. Electrons originating from reduced cytochrome c in the intermembrane space (IMS) are transferred via the dinuclear copper A center (CU(A)) of subunit 2 and heme A of subunit 1 to the active site in subunit 1, a binuclear center (BNC) formed by heme A3 and copper B (CU(B)). The BNC reduces molecular oxygen to 2 water molecules using 4 electrons from cytochrome c in the IMS and 4 protons from the mitochondrial matrix. The polypeptide is Cytochrome c oxidase subunit 3 (MT-CO3) (Bos taurus (Bovine)).